A 261-amino-acid chain; its full sequence is Sepiapterin reductase (261 aa).

Met-1 bears the N-acetylmethionine mark. Residue 15 to 21 (GASRGFG) participates in NADP(+) binding. At Ser-33 the chain carries Phosphoserine. 43-44 (RS) serves as a coordination point for NADP(+). The residue at position 46 (Ser-46) is a Phosphoserine. 70 to 71 (DL) is an NADP(+) binding site. Substrate-binding positions include 158–159 (SL) and Tyr-171. Residue Lys-175 coordinates NADP(+). Ser-196 carries the post-translational modification Phosphoserine. Residue Gly-200 participates in substrate binding. 202 to 207 (LDNDMQ) is an NADP(+) binding site. Ser-214 bears the Phosphoserine mark. Positions 222 and 258 each coordinate substrate.

It belongs to the sepiapterin reductase family. As to quaternary structure, homodimer.

The protein resides in the cytoplasm. It catalyses the reaction L-erythro-7,8-dihydrobiopterin + NADP(+) = L-sepiapterin + NADPH + H(+). It carries out the reaction (6R)-L-erythro-5,6,7,8-tetrahydrobiopterin + 2 NADP(+) = 6-pyruvoyl-5,6,7,8-tetrahydropterin + 2 NADPH + 2 H(+). Functionally, catalyzes the final one or two reductions in tetra-hydrobiopterin biosynthesis to form 5,6,7,8-tetrahydrobiopterin. The sequence is that of Sepiapterin reductase (Spr) from Mus musculus (Mouse).